A 413-amino-acid polypeptide reads, in one-letter code: cAMP-dependent protein kinase regulatory subunit (413 aa).

Residues 1 to 145 (MADSSSFPGT…DSWTPPCHPK (145 aa)) are disordered. Positions 24-161 (SPIQKISEEE…RLKTAVSNNF (138 aa)) are dimerization and phosphorylation. The span at 58–67 (GNSFNGDNGS) shows a compositional bias: low complexity. Polar residues predominate over residues 121–138 (TSVSAESLNPTSAGSDSW). S122 is modified (phosphoserine). Residues 162–291 (LFSH…FLEE), E240, R249, 294–413 (LLSS…PSPS), E361, and R370 each bind 3',5'-cyclic AMP.

Belongs to the cAMP-dependent kinase regulatory chain family. As to quaternary structure, tetramer, composed of 2 regulatory (R) and 2 catalytic (C) subunits. In the presence of cAMP it dissociates into 2 active monomeric C subunits and an R dimer.

This is cAMP-dependent protein kinase regulatory subunit (pkaR) from Aspergillus fumigatus (strain ATCC MYA-4609 / CBS 101355 / FGSC A1100 / Af293) (Neosartorya fumigata).